The sequence spans 181 residues: MEQFRGTTILSVRRNGKVVIGGDGQVSMGSTIMKANARKVRRLYNGKVIAGFAGGTADAFTLFERFESKLEKHSGNLTRAAVELAKDWRTDRILRRLEALLTVADSKASLIITGLGDVIEPEQSLMAIGSGGSFAQAAAKALLENTKLSARKIVEKALTIAADICIYTNQNFTIEELDSES.

The active site involves threonine 7. Residues alanine 162, cysteine 165, and threonine 168 each contribute to the Na(+) site.

Belongs to the peptidase T1B family. HslV subfamily. A double ring-shaped homohexamer of HslV is capped on each side by a ring-shaped HslU homohexamer. The assembly of the HslU/HslV complex is dependent on binding of ATP.

The protein resides in the cytoplasm. It catalyses the reaction ATP-dependent cleavage of peptide bonds with broad specificity.. Allosterically activated by HslU binding. Protease subunit of a proteasome-like degradation complex believed to be a general protein degrading machinery. In Coxiella burnetii (strain Dugway 5J108-111), this protein is ATP-dependent protease subunit HslV.